The primary structure comprises 664 residues: Chaperone protein dnaK1 (664 aa).

At Thr198 the chain carries Phosphothreonine; by autocatalysis.

This sequence belongs to the heat shock protein 70 family.

In terms of biological role, acts as a chaperone. This Prochlorococcus marinus (strain MIT 9313) protein is Chaperone protein dnaK1 (dnaK1).